The chain runs to 478 residues: MAERIAASLLPAASPSPAPSPPPPRPRVSAAAAASFPCCSTSAGGLRLRSRPSRFPQKAATTRSGRAGAGARAVVRCMAAAAVAASDAAQLKSAREDIREILKTTYCHPIMVRLGWHDSGTYDKNIEEWPQRGGADGSLRFDAELSHGANAGLINALKLIQPIKDKYPGITYADLFQLASATAIEEAGGPKIPMKYGRVDVTAAEQCPPEGRLPDAGPRVPADHLREVFYRMGLDDKEIVALSGAHTLGRSRPDRSGWGKPETKYTKDGPGEPGGQSWTVEWLKFDNSYFKDIKEQRDQDLLVLPTDAALFEDPSFKVYAEKYAEDQEAFFKDYAEAHAKLSDLGAKFDPPEGFSLDDEPAVEEKDPEPAPAPAAAPPPPPVEEKKEAEPTPVPVTVGAAVASSPADDNNGAAPQPEPFVAAKYSYGKKELSDSMKQKIRAEYEGFGGSPDKPLQSNYFLNIMLLIGGLAFLTSLLGS.

Residues 1–13 (MAERIAASLLPAA) are compositionally biased toward low complexity. Disordered regions lie at residues 1-31 (MAER…VSAA) and 44-66 (GGLR…RSGR). The N-terminal 76 residues, 1 to 76 (MAERIAASLL…AGAGARAVVR (76 aa)), are a transit peptide targeting the chloroplast. Residues 14-26 (SPSPAPSPPPPRP) are compositionally biased toward pro residues. The active-site Proton acceptor is the His117. A disordered region spans residues 245-276 (AHTLGRSRPDRSGWGKPETKYTKDGPGEPGGQ). His246 contributes to the heme b binding site. Thr247 is a binding site for K(+). The span at 251–270 (SRPDRSGWGKPETKYTKDGP) shows a compositional bias: basic and acidic residues. K(+)-binding residues include Thr279 and Asp286. The tract at residues 346–417 (AKFDPPEGFS…DNNGAAPQPE (72 aa)) is disordered. A compositionally biased stretch (pro residues) spans 369-381 (PAPAPAAAPPPPP). Residues 394 to 406 (PVTVGAAVASSPA) show a composition bias toward low complexity. The helical transmembrane segment at 458–478 (YFLNIMLLIGGLAFLTSLLGS) threads the bilayer.

This sequence belongs to the peroxidase family. Ascorbate peroxidase subfamily. In terms of assembly, interacts with SWEET11/OS8N3. Heme b is required as a cofactor. Expressed in roots, leaves, stems and flowers. Expressed in leaves, shoots and panicles. Expressed at low levels in roots.

Its subcellular location is the plastid. It localises to the chloroplast thylakoid membrane. The enzyme catalyses L-ascorbate + H2O2 = L-dehydroascorbate + 2 H2O. Functionally, involved in defense response and tolerance to the bacterial pathogen Xanthomonas oryzae pv. oryzae (Xoo). Plays an important role in hydrogen peroxide removal during infection by Xoo. Involved in response to abiotic stress. Plays a role in hydrogen peroxide removal durings salt stress. This chain is Probable L-ascorbate peroxidase 8, chloroplastic, found in Oryza sativa subsp. japonica (Rice).